The primary structure comprises 317 residues: Transaldolase 1 (317 aa).

The Schiff-base intermediate with substrate role is filled by lysine 132.

This sequence belongs to the transaldolase family. Type 1 subfamily. In terms of assembly, homodimer.

It is found in the cytoplasm. It catalyses the reaction D-sedoheptulose 7-phosphate + D-glyceraldehyde 3-phosphate = D-erythrose 4-phosphate + beta-D-fructose 6-phosphate. Its pathway is carbohydrate degradation; pentose phosphate pathway; D-glyceraldehyde 3-phosphate and beta-D-fructose 6-phosphate from D-ribose 5-phosphate and D-xylulose 5-phosphate (non-oxidative stage): step 2/3. In terms of biological role, transaldolase is important for the balance of metabolites in the pentose-phosphate pathway. This is Transaldolase 1 from Salmonella paratyphi A (strain ATCC 9150 / SARB42).